The sequence spans 452 residues: UDP-N-acetylmuramoylalanine--D-glutamate ligase (452 aa).

ATP is bound at residue 115-121 (GTNGKTT).

This sequence belongs to the MurCDEF family.

It is found in the cytoplasm. The enzyme catalyses UDP-N-acetyl-alpha-D-muramoyl-L-alanine + D-glutamate + ATP = UDP-N-acetyl-alpha-D-muramoyl-L-alanyl-D-glutamate + ADP + phosphate + H(+). Its pathway is cell wall biogenesis; peptidoglycan biosynthesis. Functionally, cell wall formation. Catalyzes the addition of glutamate to the nucleotide precursor UDP-N-acetylmuramoyl-L-alanine (UMA). This is UDP-N-acetylmuramoylalanine--D-glutamate ligase from Citrifermentans bemidjiense (strain ATCC BAA-1014 / DSM 16622 / JCM 12645 / Bem) (Geobacter bemidjiensis).